The sequence spans 113 residues: MPATPAKRAKRVQQEKRHHKKRTETFSVYIYRVLKQVHPETGVSKKSMSIMNSFINDIFEKIALEASKLVRYNKKHTLSSREVQTAVRLLLPGELAKHAVSEGTKAVTKYTSS.

The segment at 1-21 (MPATPAKRAKRVQQEKRHHKK) is disordered. A compositionally biased stretch (basic residues) spans 7–21 (KRAKRVQQEKRHHKK). Residue Lys109 forms a Glycyl lysine isopeptide (Lys-Gly) (interchain with G-Cter in ubiquitin) linkage.

It belongs to the histone H2B family. As to quaternary structure, the nucleosome is a histone octamer containing two molecules each of H2A, H2B, H3 and H4 assembled in one H3-H4 heterotetramer and two H2A-H2B heterodimers. The octamer wraps approximately 147 bp of DNA. Post-translationally, monoubiquitination of Lys-109 gives a specific tag for epigenetic transcriptional activation and is also prerequisite for histone H3 'Lys-4' and 'Lys-79' methylation.

Its subcellular location is the nucleus. It localises to the chromosome. Its function is as follows. Core component of nucleosome. Nucleosomes wrap and compact DNA into chromatin, limiting DNA accessibility to the cellular machineries which require DNA as a template. Histones thereby play a central role in transcription regulation, DNA repair, DNA replication and chromosomal stability. DNA accessibility is regulated via a complex set of post-translational modifications of histones, also called histone code, and nucleosome remodeling. In Euplotes crassus, this protein is Histone H2B (H2B1).